Consider the following 70-residue polypeptide: Homeobox protein CDX (70 aa).

Positions 1–60 form a DNA-binding region, homeobox; it reads PDKYRVVYTDYQRLELEKEFHYSRYITMNRKAELAKSLDLTERQIKIWFQNRRAKERKIN.

This sequence belongs to the Caudal homeobox family.

It localises to the nucleus. This chain is Homeobox protein CDX (CDX), found in Lineus sanguineus (Ribbon worm).